A 205-amino-acid polypeptide reads, in one-letter code: dITP/XTP pyrophosphatase (205 aa).

Position 8–13 (8–13 (SGNKGK)) interacts with substrate. Catalysis depends on Asp-69, which acts as the Proton acceptor. Position 69 (Asp-69) interacts with Mg(2+). Substrate is bound by residues Ser-70, 153-156 (HGYD), Lys-176, and 181-182 (HR).

It belongs to the HAM1 NTPase family. In terms of assembly, homodimer. Mg(2+) serves as cofactor.

The enzyme catalyses XTP + H2O = XMP + diphosphate + H(+). It catalyses the reaction dITP + H2O = dIMP + diphosphate + H(+). The catalysed reaction is ITP + H2O = IMP + diphosphate + H(+). Pyrophosphatase that catalyzes the hydrolysis of nucleoside triphosphates to their monophosphate derivatives, with a high preference for the non-canonical purine nucleotides XTP (xanthosine triphosphate), dITP (deoxyinosine triphosphate) and ITP. Seems to function as a house-cleaning enzyme that removes non-canonical purine nucleotides from the nucleotide pool, thus preventing their incorporation into DNA/RNA and avoiding chromosomal lesions. This chain is dITP/XTP pyrophosphatase, found in Shewanella oneidensis (strain ATCC 700550 / JCM 31522 / CIP 106686 / LMG 19005 / NCIMB 14063 / MR-1).